Here is a 350-residue protein sequence, read N- to C-terminus: Dihydroorotate dehydrogenase (quinone) (350 aa).

Residues Ala59 to Lys63 and Thr83 each bind FMN. Lys63 lines the substrate pocket. Asn108 to Phe112 is a binding site for substrate. 2 residues coordinate FMN: Asn136 and Asn169. Substrate is bound at residue Asn169. Ser172 (nucleophile) is an active-site residue. Asn174 is a substrate binding site. The FMN site is built by Lys214 and Thr242. Asn243 to Thr244 contacts substrate. FMN-binding positions include Gly265, Gly294, and Tyr315–Ser316.

It belongs to the dihydroorotate dehydrogenase family. Type 2 subfamily. As to quaternary structure, monomer. FMN serves as cofactor.

Its subcellular location is the cell membrane. The enzyme catalyses (S)-dihydroorotate + a quinone = orotate + a quinol. It functions in the pathway pyrimidine metabolism; UMP biosynthesis via de novo pathway; orotate from (S)-dihydroorotate (quinone route): step 1/1. Functionally, catalyzes the conversion of dihydroorotate to orotate with quinone as electron acceptor. The polypeptide is Dihydroorotate dehydrogenase (quinone) (Aromatoleum aromaticum (strain DSM 19018 / LMG 30748 / EbN1) (Azoarcus sp. (strain EbN1))).